Consider the following 293-residue polypeptide: Homoserine kinase (293 aa).

84–94 (PLSRGLGSSSA) serves as a coordination point for ATP.

Belongs to the GHMP kinase family. Homoserine kinase subfamily.

The protein resides in the cytoplasm. It catalyses the reaction L-homoserine + ATP = O-phospho-L-homoserine + ADP + H(+). Its pathway is amino-acid biosynthesis; L-threonine biosynthesis; L-threonine from L-aspartate: step 4/5. Functionally, catalyzes the ATP-dependent phosphorylation of L-homoserine to L-homoserine phosphate. In Aliarcobacter butzleri (strain RM4018) (Arcobacter butzleri), this protein is Homoserine kinase.